Consider the following 377-residue polypeptide: Gibberellin 20 oxidase 1 (377 aa).

The region spanning 222-322 is the Fe2OG dioxygenase domain; that stretch reads ENDSIMRLNY…RKSLAFFLCP (101 aa). Residues His247, Asp249, and His303 each contribute to the Fe cation site. Residue Arg313 is part of the active site.

This sequence belongs to the iron/ascorbate-dependent oxidoreductase family. GA20OX subfamily. Requires Fe(2+) as cofactor. L-ascorbate is required as a cofactor. Highly expressed in stems and inflorescence tissues. Detected in seeds, roots, leaves and siliques.

It catalyses the reaction gibberellin A12 + 2 2-oxoglutarate + 3 O2 + H(+) = gibberellin A9 + 2 succinate + 3 CO2 + 2 H2O. The enzyme catalyses gibberellin A12 + 2-oxoglutarate + O2 = gibberellin A15 + succinate + CO2. It carries out the reaction gibberellin A15 + 2-oxoglutarate + O2 = gibberellin A24 + succinate + CO2 + H2O. The catalysed reaction is gibberellin A53 + 2-oxoglutarate + O2 = gibberellin A44 + succinate + CO2. The protein operates within plant hormone biosynthesis; gibberellin biosynthesis. Its function is as follows. Key oxidase enzyme in the biosynthesis of gibberellin that catalyzes the conversion of GA12 to GA9, via a three-step oxidation at C-20 of the GA skeleton. GA53 is less effectively oxidized than GA12 and is only oxidized one step to GA44. Involved in the promotion of the floral transition, fertility and silique elongation, but plays only a minor role in elongation of seedling organs. Acts redundantly with GA20OX2. This chain is Gibberellin 20 oxidase 1 (GA20OX1), found in Arabidopsis thaliana (Mouse-ear cress).